We begin with the raw amino-acid sequence, 408 residues long: UDP-N-acetylglucosamine--dolichyl-phosphate N-acetylglucosaminephosphotransferase (408 aa).

2 consecutive transmembrane segments (helical) span residues 6–26 and 32–52; these read SLLG…IYLP and WIIV…YKLI. 2 residues coordinate UDP-N-acetyl-alpha-D-glucosamine: Asp-68 and Glu-84. 2 consecutive transmembrane segments (helical) span residues 87–107 and 120–140; these read GICV…FQWF and AALT…VLNL. A dolichyl phosphate-binding site is contributed by Lys-145. 2 helical membrane passes run 147-167 and 181-201; these read ILPM…TTVV and LGVV…LAIF. 200–208 is a binding site for dolichyl phosphate; sequence IFCTNSINI. Asn-207 contributes to the Mg(2+) binding site. UDP-N-acetyl-alpha-D-glucosamine is bound at residue Asn-213. The next 2 helical transmembrane spans lie at 221–241 and 258–278; these read VVIA…ASSV and HLFS…LLFY. Mg(2+) is bound at residue Asp-289. A helical transmembrane segment spans residues 297–317; that stretch reads MCFAVVAILCHFSKTLLLFFI. A UDP-N-acetyl-alpha-D-glucosamine-binding site is contributed by 338–340; the sequence is RHR. 2 helical membrane-spanning segments follow: residues 351–371 and 376–396; these read MEAI…TGPL and LCVY…GIRY.

Belongs to the glycosyltransferase 4 family. In terms of assembly, homodimer. The cofactor is Mg(2+).

It is found in the endoplasmic reticulum membrane. The enzyme catalyses a di-trans,poly-cis-dolichyl phosphate + UDP-N-acetyl-alpha-D-glucosamine = an N-acetyl-alpha-D-glucosaminyl-diphospho-di-trans,poly-cis-dolichol + UMP. The protein operates within protein modification; protein glycosylation. Inhibited by natural nucleoside antibiotic tunicamycin, which acts as a structural analog and competitor of UDP-GlcNAc. UDP-N-acetylglucosamine--dolichyl-phosphate N-acetylglucosaminephosphotransferase that operates in the biosynthetic pathway of dolichol-linked oligosaccharides, the glycan precursors employed in protein asparagine (N)-glycosylation. The assembly of dolichol-linked oligosaccharides begins on the cytosolic side of the endoplasmic reticulum membrane and finishes in its lumen. The sequential addition of sugars to dolichol pyrophosphate produces dolichol-linked oligosaccharides containing fourteen sugars, including two GlcNAcs, nine mannoses and three glucoses. Once assembled, the oligosaccharide is transferred from the lipid to nascent proteins by oligosaccharyltransferases. Catalyzes the initial step of dolichol-linked oligosaccharide biosynthesis, transfering GlcNAc-1-P from cytosolic UDP-GlcNAc onto the carrier lipid dolichyl phosphate (P-dolichol), yielding GlcNAc-P-P-dolichol embedded in the cytoplasmic leaflet of the endoplasmic reticulum membrane. The chain is UDP-N-acetylglucosamine--dolichyl-phosphate N-acetylglucosaminephosphotransferase (alg7) from Dictyostelium discoideum (Social amoeba).